The chain runs to 288 residues: Probable HTH-type transcriptional regulator STM3175 (288 aa).

The HTH araC/xylS-type domain occupies 14-113 (RRVCDHIERH…GQSPRRFRQS (100 aa)). 2 DNA-binding regions (H-T-H motif) span residues 31-52 (EALSRMAHSSPFHFHRQFTTWS) and 80-103 (VIDIALDAGFQNPESFTRAFKTAF). The segment at 111–288 (RQSPDWLAWH…LLTDIYLPLR (178 aa)) is putative effector binding domain; binds the peptide antibiotic albicidin.

In terms of assembly, homodimer.

In terms of biological role, probable transcription factor. This chain is Probable HTH-type transcriptional regulator STM3175, found in Salmonella typhimurium (strain LT2 / SGSC1412 / ATCC 700720).